A 1041-amino-acid polypeptide reads, in one-letter code: MTDNAYPKLAGGAPDLPALELEVLDYWSRDDTFRASIARRDGAPEYVFYDGPPFANGLPHYGHLLTGYVKDIVPRYRTMRGYKVERRFGWDTHGLPAELEVERQLGITDKSQIEAMGIAAFNDACRASVLRYTDEWQAYVTRQARWVDFDNDYKTLDLAYMESVIWAFKQLWDKGLAYEGYRVLPYCWRDETPLSNHELRMDDDVYQSRQDPAVTVGFKVVGGQPDNGLDGAYLLVWTTTPWTLPSNLAVAVSPDITYVQVQAGDRRFVLAEARLAAYARELGEEPVVLGTYRGAELLGTRYLPPFAYFMDWPNAFQVLAGDFVTTDDGTGIVHMAPAYGEDDMVVAEAVGIAPVTPVDSKGRFDVTVADYQGQHVFDANAQIVRDLKTQSGPAAVNGPVLIRHETYEHPYPHCWRCRNPLIYRSVSSWFVRVTDFRDRMVELNQQITWYPEHVKDGQFGKWLQGARDWSISRNRYWGTPIPVWKSDDPAYPRIDVYGSLDELERDFGVRPANLHRPYIDELTRPNPDDPTGRSTMRRIPDVLDVWFDSGSMPYAQVHYPFENLDWFQGHYPGDFIVEYIGQTRGWFYTLHVLATALFDRPAFKTCVAHGIVLGFDGQKMSKSLRNYPDVTEVFDRDGSDAMRWFLMASPILRGGNLIVTEQGIRDGVRQVLLPLWNTYSFLALYAPKVGTWRVDSVHVLDRYILAKLAVLRDDLSESMEVYDIPGACEHLRQFTEALTNWYVRRSRSRFWAEDADAIDTLHTVLEVTTRLAAPLLPLITEIIWRGLTRERSVHLTDWPAPDLLPSDADLVAAMDQVRDVCSAASSLRKAKKLRVRLPLPKLIVAVENPQLLRPFVDLIGDELNVKQVELTDAIDTYGRFELTVNARVAGPRLGKDVQAAIKAVKAGDGVINPDGTLLAGPAVLTADEYNSRLVAADPESTAALPDGAGLVVLDGTVTAELEAEGWAKDRIRELQELRKSTGLDVSDRIRVVMSVPAEREDWARTHRDLIAGEILATDFEFADLADGVAIGDGVRVSIEKT.

The short motif at 53–63 (PFANGLPHYGH) is the 'HIGH' region element. A 'KMSKS' region motif is present at residues 619–623 (KMSKS). Lysine 622 contacts ATP.

This sequence belongs to the class-I aminoacyl-tRNA synthetase family. IleS type 2 subfamily. As to quaternary structure, monomer. Zn(2+) serves as cofactor.

It is found in the cytoplasm. The enzyme catalyses tRNA(Ile) + L-isoleucine + ATP = L-isoleucyl-tRNA(Ile) + AMP + diphosphate. In terms of biological role, catalyzes the attachment of isoleucine to tRNA(Ile). As IleRS can inadvertently accommodate and process structurally similar amino acids such as valine, to avoid such errors it has two additional distinct tRNA(Ile)-dependent editing activities. One activity is designated as 'pretransfer' editing and involves the hydrolysis of activated Val-AMP. The other activity is designated 'posttransfer' editing and involves deacylation of mischarged Val-tRNA(Ile). In Mycobacterium bovis (strain ATCC BAA-935 / AF2122/97), this protein is Isoleucine--tRNA ligase.